The primary structure comprises 525 residues: GMP synthase [glutamine-hydrolyzing] (525 aa).

The Glutamine amidotransferase type-1 domain maps to 8–207; it reads KILILDFGSQ…ALDICQCEAN (200 aa). Residue Cys-85 is the Nucleophile of the active site. Active-site residues include His-181 and Glu-183. The 193-residue stretch at 208–400 folds into the GMPS ATP-PPase domain; the sequence is WKPSSIIEDA…LGLPYNMLYR (193 aa). 235–241 provides a ligand contact to ATP; that stretch reads SGGVDSS.

In terms of assembly, homodimer.

It catalyses the reaction XMP + L-glutamine + ATP + H2O = GMP + L-glutamate + AMP + diphosphate + 2 H(+). The protein operates within purine metabolism; GMP biosynthesis; GMP from XMP (L-Gln route): step 1/1. Its function is as follows. Catalyzes the synthesis of GMP from XMP. In Shewanella loihica (strain ATCC BAA-1088 / PV-4), this protein is GMP synthase [glutamine-hydrolyzing].